The chain runs to 1564 residues: Tetratricopeptide repeat protein 37 (1564 aa).

TPR repeat units follow at residues 6-39, 40-73, 75-110, 116-149, 237-271, 306-339, 420-453, 456-492, 493-527, 564-597, 598-631, 633-665, 678-713, 743-776, 861-894, 980-1013, 1020-1050, 1051-1084, and 1400-1433; these read VKAILKNARDAIRNKDYKEVLKQCKAVLKLEKNN, YNAWVFIGLAASELEQPDQAQAAYRKAVEIEPDQ, LAWQGLGNLYEKVNQKDFKEDLPNVYQKLLELYRSS, YEICKKLSDLYQQEKNYVPAAHTWHQLIKMKEDE, IYPLKVLALHYIKSGDITEEAICCYSKLLELDPLN, PSAWCCLAQAQLKIHKYAEALVSCDQAINGATQD, AEGHFLEGLLQYIQKNYSAAEISLQYALERKPEN, YHYYLGLNYWFMSKETRRDKTKAVTQFLKAAKMDPFM, SRAFYYLGHYYSEVAGDKSRARGCYKKAFELDDSD, KWAWLRRGLFYLRVGQHSKSVSDLHAALRADPKD, SNCWECLGEAYLSRGGYTTALKSFMKASELNPDS, YSVYKIASIKQILGTYKEAVNEYQQILMKSGEY, MLAKSALSDFLDLKAVDAIEKAIEFLARAIRLRPDL, LLGNDEEQQLLNKPEVLALGGRCYGRALRIQSTA, VAAWTNLGALYLMNGNIELSHQAFKVAQSLDPLY, RTAFEMLGYLNEHLNLKKQASESYRRVVSILQER, NSALQHYGRSLCAVGQYQEAIQTFSSTPLTE, FDDLTGIALAFFKKGLLQESMKAYKQALSVAKSD, and HNAWHWLAEVYQSLGMMMDAEMCYRKSLQLASQQ.

In Xenopus laevis (African clawed frog), this protein is Tetratricopeptide repeat protein 37 (ttc37).